The chain runs to 227 residues: Lipoprotein-releasing system ATP-binding protein LolD (227 aa).

Residues 6-227 enclose the ABC transporter domain; it reads LVLDDIQKSY…RLDEGVLVSA (222 aa). Position 43–50 (43–50) interacts with ATP; sequence APSGAGKS.

It belongs to the ABC transporter superfamily. Lipoprotein translocase (TC 3.A.1.125) family. The complex is composed of two ATP-binding proteins (LolD) and two transmembrane proteins (LolC and LolE).

It is found in the cell inner membrane. Its function is as follows. Part of the ABC transporter complex LolCDE involved in the translocation of mature outer membrane-directed lipoproteins, from the inner membrane to the periplasmic chaperone, LolA. Responsible for the formation of the LolA-lipoprotein complex in an ATP-dependent manner. This Jannaschia sp. (strain CCS1) protein is Lipoprotein-releasing system ATP-binding protein LolD.